A 340-amino-acid polypeptide reads, in one-letter code: Chitinase 7 (340 aa).

Residues 1-32 (MIAARAANLQVAMKALALAVLALAYAAATARA) form the signal peptide. The region spanning 33 to 73 (EQCGRQAGGARCPNRLCCSRWGWCGLTDDYCKGGCQSQCRV) is the Chitin-binding type-1 domain. 7 disulfide bridges follow: Cys35/Cys50, Cys44/Cys56, Cys49/Cys63, Cys67/Cys71, Cys118/Cys173, Cys185/Cys193, and Cys293/Cys323.

Belongs to the glycosyl hydrolase 19 family. Chitinase class I subfamily. As to expression, expressed in pistils, stamens and lodicules.

The enzyme catalyses Random endo-hydrolysis of N-acetyl-beta-D-glucosaminide (1-&gt;4)-beta-linkages in chitin and chitodextrins.. Functionally, hydrolyzes chitin and may play a role in defense against fungal pathogens containing chitin. The sequence is that of Chitinase 7 (Cht7) from Oryza sativa subsp. japonica (Rice).